A 201-amino-acid polypeptide reads, in one-letter code: Glycerol-3-phosphate acyltransferase (201 aa).

A run of 5 helical transmembrane segments spans residues 10–30 (MLIG…GLIL), 60–80 (LAAA…LIAA), 86–106 (AAIA…WIGF), 116–136 (LGVL…AWIV), and 166–186 (ALAA…RANI).

It belongs to the PlsY family. As to quaternary structure, probably interacts with PlsX.

The protein localises to the cell inner membrane. The catalysed reaction is an acyl phosphate + sn-glycerol 3-phosphate = a 1-acyl-sn-glycero-3-phosphate + phosphate. Its pathway is lipid metabolism; phospholipid metabolism. In terms of biological role, catalyzes the transfer of an acyl group from acyl-phosphate (acyl-PO(4)) to glycerol-3-phosphate (G3P) to form lysophosphatidic acid (LPA). This enzyme utilizes acyl-phosphate as fatty acyl donor, but not acyl-CoA or acyl-ACP. The protein is Glycerol-3-phosphate acyltransferase of Brucella canis (strain ATCC 23365 / NCTC 10854 / RM-666).